Reading from the N-terminus, the 119-residue chain is Non-specific lipid-transfer protein 12 (119 aa).

The first 24 residues, 1-24 (MAFTPKIITCLIVLTIYMASPTES), serve as a signal peptide directing secretion. Disulfide bonds link Cys-28–Cys-75, Cys-38–Cys-52, Cys-53–Cys-98, and Cys-73–Cys-112.

Belongs to the plant LTP family.

Plant non-specific lipid-transfer proteins transfer phospholipids as well as galactolipids across membranes. May play a role in wax or cutin deposition in the cell walls of expanding epidermal cells and certain secretory tissues. In Arabidopsis thaliana (Mouse-ear cress), this protein is Non-specific lipid-transfer protein 12 (LTP12).